Here is a 212-residue protein sequence, read N- to C-terminus: ATP-dependent Clp protease proteolytic subunit (212 aa).

S107 serves as the catalytic Nucleophile. H132 is an active-site residue.

It belongs to the peptidase S14 family. Fourteen ClpP subunits assemble into 2 heptameric rings which stack back to back to give a disk-like structure with a central cavity, resembling the structure of eukaryotic proteasomes.

The protein resides in the cytoplasm. It carries out the reaction Hydrolysis of proteins to small peptides in the presence of ATP and magnesium. alpha-casein is the usual test substrate. In the absence of ATP, only oligopeptides shorter than five residues are hydrolyzed (such as succinyl-Leu-Tyr-|-NHMec, and Leu-Tyr-Leu-|-Tyr-Trp, in which cleavage of the -Tyr-|-Leu- and -Tyr-|-Trp bonds also occurs).. Functionally, cleaves peptides in various proteins in a process that requires ATP hydrolysis. Has a chymotrypsin-like activity. Plays a major role in the degradation of misfolded proteins. The protein is ATP-dependent Clp protease proteolytic subunit of Pseudoalteromonas atlantica (strain T6c / ATCC BAA-1087).